We begin with the raw amino-acid sequence, 185 residues long: uncharacterized protein (185 aa).

The next 3 helical transmembrane spans lie at 32–52 (LIFVPDSPTATFFFLFVLLAF), 66–86 (LVTLVKYGLWAVAMNFLVLAV), and 155–175 (IGYGTFWLSIFSIALAYFLVV).

It localises to the cell membrane. This is an uncharacterized protein from Bacillus subtilis (strain 168).